The following is a 147-amino-acid chain: MAFFSIFKQGQIYLNTWPQEAKLGIIFPENRIMKATSFAQKFMPFVAVFAILWQQIYAKNDLMAFSIAILTALFALLIPFQGLYWLGKRANSPLENQSAVWFYDICERLKQQNEPLPFVQEKPTYQHLAEVLRKAQSKFERAFWQEI.

Helical transmembrane passes span 38–58 and 67–87; these read FAQK…QIYA and IAIL…YWLG.

Belongs to the UPF0208 family.

It is found in the cell inner membrane. In Haemophilus influenzae (strain PittEE), this protein is UPF0208 membrane protein CGSHiEE_06015.